Consider the following 272-residue polypeptide: MANYTAADVKKLREMTGSGMMDCKKALVEAEGDFDKAIEILRIQGAKDVGKRAERSASEGLIAVSGNTMIEVNAETDFVAKNQEFIDFANKVAQAADAANANSREELEAVEVDGVKAVDALQELSAKIGEKLELKRAVTLEGDKVAVYLHQRSADLPPAVGVLVAYEGENEEAARAAAMQVAALKASFLSTDDIPAETVAKEREIAEATAREEGKPEKALPNIIEGRLKGYFKDVVLLEQPSVTESKKTVKQVMDEAGVKLTGFVRYELGQA.

The involved in Mg(2+) ion dislocation from EF-Tu stretch occupies residues 76-79 (TDFV).

The protein belongs to the EF-Ts family.

It is found in the cytoplasm. In terms of biological role, associates with the EF-Tu.GDP complex and induces the exchange of GDP to GTP. It remains bound to the aminoacyl-tRNA.EF-Tu.GTP complex up to the GTP hydrolysis stage on the ribosome. This chain is Elongation factor Ts, found in Corynebacterium urealyticum (strain ATCC 43042 / DSM 7109).